Reading from the N-terminus, the 191-residue chain is Probable protein-S-isoprenylcysteine O-methyltransferase (191 aa).

Helical transmembrane passes span 8–28 (WLFA…AAAF), 45–65 (YVLA…LFPE), and 66–86 (LKEY…GEVI). S-adenosyl-L-methionine-binding positions include 110-113 (HKLI), Tyr118, and 123-126 (HPGY). A helical membrane pass occupies residues 129–149 (FLIWAVGTQVMLCNPLSTVAF). A substrate-binding site is contributed by Arg160. Position 164 (Glu164) interacts with S-adenosyl-L-methionine.

Belongs to the class VI-like SAM-binding methyltransferase superfamily. Isoprenylcysteine carboxyl methyltransferase family. It depends on Zn(2+) as a cofactor.

The protein localises to the endoplasmic reticulum membrane. It carries out the reaction [protein]-C-terminal S-[(2E,6E)-farnesyl]-L-cysteine + S-adenosyl-L-methionine = [protein]-C-terminal S-[(2E,6E)-farnesyl]-L-cysteine methyl ester + S-adenosyl-L-homocysteine. In terms of biological role, catalyzes the post-translational methylation of isoprenylated C-terminal cysteine residues. Carboxyl methylation is a reversible and potentially regulated step in the post-translational modification of prenylated proteins. The sequence is that of Probable protein-S-isoprenylcysteine O-methyltransferase (ICMT) from Oryza sativa subsp. indica (Rice).